Consider the following 795-residue polypeptide: Phenylalanine--tRNA ligase beta subunit (795 aa).

A tRNA-binding domain is found at 39 to 148 (AGTFNGVKVG…IDAPIGMDFR (110 aa)). The B5 domain maps to 401 to 476 (PKPNKVALRR…RIYGYDNIPN (76 aa)). 4 residues coordinate Mg(2+): aspartate 454, aspartate 460, glutamate 463, and glutamate 464. The FDX-ACB domain maps to 701–794 (SKFPANRRDI…VSEKFGASLR (94 aa)).

This sequence belongs to the phenylalanyl-tRNA synthetase beta subunit family. Type 1 subfamily. As to quaternary structure, tetramer of two alpha and two beta subunits. It depends on Mg(2+) as a cofactor.

The protein localises to the cytoplasm. The catalysed reaction is tRNA(Phe) + L-phenylalanine + ATP = L-phenylalanyl-tRNA(Phe) + AMP + diphosphate + H(+). This Vibrio vulnificus (strain CMCP6) protein is Phenylalanine--tRNA ligase beta subunit.